Reading from the N-terminus, the 344-residue chain is Dihydroorotase (344 aa).

H14 and H16 together coordinate Zn(2+). Substrate-binding positions include 16–18 (HLR) and N42. Positions 100, 137, and 175 each coordinate Zn(2+). Residue K100 is modified to N6-carboxylysine. Substrate is bound at residue H137. Residue L220 participates in substrate binding. D248 contacts Zn(2+). Residue D248 is part of the active site. Substrate is bound by residues H252 and A264.

Belongs to the metallo-dependent hydrolases superfamily. DHOase family. Class II DHOase subfamily. As to quaternary structure, homodimer. It depends on Zn(2+) as a cofactor.

It carries out the reaction (S)-dihydroorotate + H2O = N-carbamoyl-L-aspartate + H(+). It functions in the pathway pyrimidine metabolism; UMP biosynthesis via de novo pathway; (S)-dihydroorotate from bicarbonate: step 3/3. Functionally, catalyzes the reversible cyclization of carbamoyl aspartate to dihydroorotate. In Roseobacter denitrificans (strain ATCC 33942 / OCh 114) (Erythrobacter sp. (strain OCh 114)), this protein is Dihydroorotase.